The chain runs to 110 residues: Prothymosin alpha (110 aa).

Met-1 is modified (N-acetylmethionine). The segment at 1–110 is disordered; sequence MSDAAVDTSS…TKKQKTDEDD (110 aa). An N-acetylserine; in Prothymosin alpha, N-terminally processed modification is found at Ser-2. Phosphoserine is present on Ser-2. Thr-8 carries the phosphothreonine; by CK2 modification. Residues Ser-9 and Ser-10 each carry the phosphoserine modification. Residues Thr-13 and Thr-14 each carry the phosphothreonine; by CK2 modification. The segment covering 13–31 has biased composition (basic and acidic residues); the sequence is TTKDLKEKKEVVEEAENGR. Lys-15 carries the post-translational modification N6-acetyllysine; alternate. Lys-15 is modified (N6-succinyllysine; alternate). Residues 32-41 show a composition bias toward low complexity; the sequence is EAPANGNANE. Acidic residues predominate over residues 42 to 83; that stretch reads ENGEQEADNEVDEEEEEGGEEEEEEEEGDGEEEDGDEDEEAE. A compositionally biased stretch (basic and acidic residues) spans 100 to 110; the sequence is DTKKQKTDEDD. Thr-101 carries the phosphothreonine modification. Lys-102 bears the N6-acetyllysine; alternate mark. Lys-102 participates in a covalent cross-link: Glycyl lysine isopeptide (Lys-Gly) (interchain with G-Cter in SUMO2); alternate. Thr-106 bears the Phosphothreonine mark.

Belongs to the pro/parathymosin family. Interacts with NUPR1; regulates apoptotic process. Post-translationally, covalently linked to a small RNA of about 20 nucleotides.

Its subcellular location is the nucleus. Prothymosin alpha may mediate immune function by conferring resistance to certain opportunistic infections. In Bos taurus (Bovine), this protein is Prothymosin alpha (PTMA).